We begin with the raw amino-acid sequence, 79 residues long: UPF0654 protein C11D3.01c (79 aa).

The disordered stretch occupies residues 1–79 (MPNPGNVIGG…RAQEELENLE (79 aa)). Residues 22–45 (EETKQREKEYLEEHEGEVGEEHQK) are compositionally biased toward basic and acidic residues.

Belongs to the UPF0654 (con-6) family.

The chain is UPF0654 protein C11D3.01c from Schizosaccharomyces pombe (strain 972 / ATCC 24843) (Fission yeast).